A 147-amino-acid polypeptide reads, in one-letter code: Deoxyuridine 5'-triphosphate nucleotidohydrolase (147 aa).

Substrate-binding positions include Arg-67–Gly-69, Asn-80, and Thr-84–Asp-86.

Belongs to the dUTPase family. Mg(2+) is required as a cofactor.

It carries out the reaction dUTP + H2O = dUMP + diphosphate + H(+). Its pathway is pyrimidine metabolism; dUMP biosynthesis; dUMP from dCTP (dUTP route): step 2/2. In terms of biological role, this enzyme is involved in nucleotide metabolism: it produces dUMP, the immediate precursor of thymidine nucleotides and it decreases the intracellular concentration of dUTP so that uracil cannot be incorporated into DNA. The polypeptide is Deoxyuridine 5'-triphosphate nucleotidohydrolase (Anaplasma marginale (strain St. Maries)).